The following is a 114-amino-acid chain: Hydrogenase maturation factor HypA (114 aa).

Position 2 (His-2) interacts with Ni(2+). Zn(2+) contacts are provided by Cys-73, Cys-76, Cys-90, and Cys-93.

It belongs to the HypA/HybF family.

Involved in the maturation of [NiFe] hydrogenases. Required for nickel insertion into the metal center of the hydrogenase. The sequence is that of Hydrogenase maturation factor HypA from Klebsiella pneumoniae (strain 342).